The following is a 168-amino-acid chain: Regulatory protein RecX (168 aa).

Belongs to the RecX family.

The protein localises to the cytoplasm. Functionally, modulates RecA activity. The protein is Regulatory protein RecX of Serratia proteamaculans (strain 568).